The primary structure comprises 24 residues: 29 kDa outer membrane protein (24 aa).

It localises to the cell outer membrane. May be involved in transporting molecules across the outer membrane. The chain is 29 kDa outer membrane protein from Acinetobacter baumannii.